The sequence spans 429 residues: Carbamoyl phosphate synthase arginine-specific small chain (429 aa).

The transit peptide at 1–20 (MIRVIQPPLIASKQLFRRYL) directs the protein to the mitochondrion. Positions 218-406 (HIAVLDCGAK…FENIEQYRAT (189 aa)) constitute a Glutamine amidotransferase type-1 domain. Catalysis depends on cysteine 295, which acts as the Nucleophile. Active-site residues include histidine 379 and glutamate 381.

It belongs to the CarA family. In terms of assembly, heterodimer composed of 2 chains; the small (or glutamine) chain promotes the hydrolysis of glutamine to ammonia, which is used by the large (or ammonia) chain to synthesize carbamoyl phosphate.

The protein localises to the mitochondrion matrix. It catalyses the reaction hydrogencarbonate + L-glutamine + 2 ATP + H2O = carbamoyl phosphate + L-glutamate + 2 ADP + phosphate + 2 H(+). It carries out the reaction L-glutamine + H2O = L-glutamate + NH4(+). It functions in the pathway amino-acid biosynthesis; L-arginine biosynthesis; carbamoyl phosphate from bicarbonate: step 1/1. Functionally, small subunit of the arginine-specific carbamoyl phosphate synthase (CPSase). CPSase catalyzes the formation of carbamoyl phosphate from the ammonia moiety of glutamine, carbonate, and phosphate donated by ATP, the first step of the arginine biosynthetic pathway. The small subunit (glutamine amidotransferase) binds and cleaves glutamine to supply the large subunit with the substrate ammonia. The polypeptide is Carbamoyl phosphate synthase arginine-specific small chain (CPA1) (Debaryomyces hansenii (strain ATCC 36239 / CBS 767 / BCRC 21394 / JCM 1990 / NBRC 0083 / IGC 2968) (Yeast)).